The sequence spans 175 residues: Ribosome maturation factor RimM (175 aa).

Residues 96 to 175 form the PRC barrel domain; the sequence is EGDYYWHDLI…TITVDWDAGF (80 aa).

The protein belongs to the RimM family. In terms of assembly, binds ribosomal protein uS19.

It is found in the cytoplasm. An accessory protein needed during the final step in the assembly of 30S ribosomal subunit, possibly for assembly of the head region. Essential for efficient processing of 16S rRNA. May be needed both before and after RbfA during the maturation of 16S rRNA. It has affinity for free ribosomal 30S subunits but not for 70S ribosomes. This is Ribosome maturation factor RimM from Actinobacillus pleuropneumoniae serotype 5b (strain L20).